The sequence spans 352 residues: Peptide chain release factor 1 (352 aa).

Gln229 carries the N5-methylglutamine modification.

This sequence belongs to the prokaryotic/mitochondrial release factor family. Post-translationally, methylated by PrmC. Methylation increases the termination efficiency of RF1.

The protein resides in the cytoplasm. Functionally, peptide chain release factor 1 directs the termination of translation in response to the peptide chain termination codons UAG and UAA. This is Peptide chain release factor 1 from Acidiphilium cryptum (strain JF-5).